A 485-amino-acid chain; its full sequence is Bifunctional protein GlmU (485 aa).

The segment at 1 to 241 is pyrophosphorylase; the sequence is MSASDFSSAV…ARELAGVNDR (241 aa). UDP-N-acetyl-alpha-D-glucosamine-binding positions include 13 to 16, K27, Q84, and 89 to 90; these read LAAG and GT. D114 lines the Mg(2+) pocket. Residues G151, E166, N181, and N239 each coordinate UDP-N-acetyl-alpha-D-glucosamine. A Mg(2+)-binding site is contributed by N239. The tract at residues 242 to 262 is linker; the sequence is VQLAEAGAELNRRTVIAAMRG. The N-acetyltransferase stretch occupies residues 263-485; sequence GATIVDPATT…AAQNVHNQEG (223 aa). UDP-N-acetyl-alpha-D-glucosamine-binding residues include R344 and K362. H374 serves as the catalytic Proton acceptor. The UDP-N-acetyl-alpha-D-glucosamine site is built by Y377 and N388. Acetyl-CoA contacts are provided by residues A391, 397–398, S416, and A434; that span reads NY. Positions 465 to 485 are disordered; the sequence is RPGTAAAQAAEAAQNVHNQEG. Over residues 469-478 the composition is skewed to low complexity; it reads AAAQAAEAAQ.

In the N-terminal section; belongs to the N-acetylglucosamine-1-phosphate uridyltransferase family. The protein in the C-terminal section; belongs to the transferase hexapeptide repeat family. In terms of assembly, homotrimer. Mg(2+) is required as a cofactor.

It localises to the cytoplasm. It carries out the reaction alpha-D-glucosamine 1-phosphate + acetyl-CoA = N-acetyl-alpha-D-glucosamine 1-phosphate + CoA + H(+). The enzyme catalyses N-acetyl-alpha-D-glucosamine 1-phosphate + UTP + H(+) = UDP-N-acetyl-alpha-D-glucosamine + diphosphate. It functions in the pathway nucleotide-sugar biosynthesis; UDP-N-acetyl-alpha-D-glucosamine biosynthesis; N-acetyl-alpha-D-glucosamine 1-phosphate from alpha-D-glucosamine 6-phosphate (route II): step 2/2. The protein operates within nucleotide-sugar biosynthesis; UDP-N-acetyl-alpha-D-glucosamine biosynthesis; UDP-N-acetyl-alpha-D-glucosamine from N-acetyl-alpha-D-glucosamine 1-phosphate: step 1/1. It participates in bacterial outer membrane biogenesis; LPS lipid A biosynthesis. In terms of biological role, catalyzes the last two sequential reactions in the de novo biosynthetic pathway for UDP-N-acetylglucosamine (UDP-GlcNAc). The C-terminal domain catalyzes the transfer of acetyl group from acetyl coenzyme A to glucosamine-1-phosphate (GlcN-1-P) to produce N-acetylglucosamine-1-phosphate (GlcNAc-1-P), which is converted into UDP-GlcNAc by the transfer of uridine 5-monophosphate (from uridine 5-triphosphate), a reaction catalyzed by the N-terminal domain. This is Bifunctional protein GlmU from Corynebacterium glutamicum (strain R).